We begin with the raw amino-acid sequence, 182 residues long: P21 prophage-derived terminase small subunit (182 aa).

31–36 (SKGSKG) provides a ligand contact to ATP.

Belongs to the terminase small subunit family. Heterooligomer of gp1 and gp2.

Involved in the initiation of the phage DNA packaging into the prohead. Processes replicating concatemeric DNA into pieces of unit length with cohesive ends. This is P21 prophage-derived terminase small subunit (nohA) from Escherichia coli O6:H1 (strain CFT073 / ATCC 700928 / UPEC).